The primary structure comprises 456 residues: Cysteine synthase 2 (456 aa).

Residues Val9 to Phe29 form a helical membrane-spanning segment.

The protein belongs to the cysteine synthase/cystathionine beta-synthase family. Pyridoxal 5'-phosphate serves as cofactor.

The protein localises to the mitochondrion outer membrane. It carries out the reaction O-acetyl-L-serine + hydrogen sulfide = L-cysteine + acetate. Putative cysteine synthase that catalyzes the conversion of O-acetyl-L-serine (OAS) into cysteine, the last step in the cysteine biosynthesis pathway. However, in contrast to cysteine synthase cys-17, this CS-like protein may not function in cysteine biosynthesis. This chain is Cysteine synthase 2, found in Neurospora crassa (strain ATCC 24698 / 74-OR23-1A / CBS 708.71 / DSM 1257 / FGSC 987).